The chain runs to 248 residues: Segregation and condensation protein A (248 aa).

It belongs to the ScpA family. Component of a cohesin-like complex composed of ScpA, ScpB and the Smc homodimer, in which ScpA and ScpB bind to the head domain of Smc. The presence of the three proteins is required for the association of the complex with DNA.

The protein resides in the cytoplasm. Functionally, participates in chromosomal partition during cell division. May act via the formation of a condensin-like complex containing Smc and ScpB that pull DNA away from mid-cell into both cell halves. The chain is Segregation and condensation protein A from Clostridium perfringens (strain SM101 / Type A).